Reading from the N-terminus, the 363-residue chain is Phosphoserine aminotransferase (363 aa).

Arg-41 is an L-glutamate binding site. Residues 75-76 (AS), Trp-100, Thr-155, Asp-175, and Gln-198 contribute to the pyridoxal 5'-phosphate site. The residue at position 199 (Lys-199) is an N6-(pyridoxal phosphate)lysine. Position 239–240 (239–240 (NT)) interacts with pyridoxal 5'-phosphate.

Belongs to the class-V pyridoxal-phosphate-dependent aminotransferase family. SerC subfamily. In terms of assembly, homodimer. It depends on pyridoxal 5'-phosphate as a cofactor.

Its subcellular location is the cytoplasm. It catalyses the reaction O-phospho-L-serine + 2-oxoglutarate = 3-phosphooxypyruvate + L-glutamate. The catalysed reaction is 4-(phosphooxy)-L-threonine + 2-oxoglutarate = (R)-3-hydroxy-2-oxo-4-phosphooxybutanoate + L-glutamate. It participates in amino-acid biosynthesis; L-serine biosynthesis; L-serine from 3-phospho-D-glycerate: step 2/3. Functionally, catalyzes the reversible conversion of 3-phosphohydroxypyruvate to phosphoserine and of 3-hydroxy-2-oxo-4-phosphonooxybutanoate to phosphohydroxythreonine. This Streptococcus agalactiae serotype III (strain NEM316) protein is Phosphoserine aminotransferase.